A 396-amino-acid chain; its full sequence is Imidazolonepropionase (396 aa).

The Fe(3+) site is built by His-70 and His-72. His-70 and His-72 together coordinate Zn(2+). Positions 79, 137, and 164 each coordinate 4-imidazolone-5-propanoate. An N-formimidoyl-L-glutamate-binding site is contributed by Tyr-137. His-227 contacts Fe(3+). His-227 contributes to the Zn(2+) binding site. Gln-230 contributes to the 4-imidazolone-5-propanoate binding site. A Fe(3+)-binding site is contributed by Asp-301. Asp-301 contributes to the Zn(2+) binding site. Residues Asn-303 and Gly-305 each contribute to the N-formimidoyl-L-glutamate site. Ser-306 serves as a coordination point for 4-imidazolone-5-propanoate.

The protein belongs to the metallo-dependent hydrolases superfamily. HutI family. Requires Zn(2+) as cofactor. Fe(3+) is required as a cofactor.

The protein resides in the cytoplasm. The enzyme catalyses 4-imidazolone-5-propanoate + H2O = N-formimidoyl-L-glutamate. Its pathway is amino-acid degradation; L-histidine degradation into L-glutamate; N-formimidoyl-L-glutamate from L-histidine: step 3/3. In terms of biological role, catalyzes the hydrolytic cleavage of the carbon-nitrogen bond in imidazolone-5-propanoate to yield N-formimidoyl-L-glutamate. It is the third step in the universal histidine degradation pathway. In Mycolicibacterium smegmatis (strain ATCC 700084 / mc(2)155) (Mycobacterium smegmatis), this protein is Imidazolonepropionase.